A 123-amino-acid polypeptide reads, in one-letter code: Fluoride-specific ion channel FluC (123 aa).

Helical transmembrane passes span 1–21, 32–52, 66–86, and 94–114; these read MQWL…GWLA, LGTL…LVWF, FVIT…AEVF, and LLAA…ATAL. Residues Gly73 and Thr76 each contribute to the Na(+) site.

This sequence belongs to the fluoride channel Fluc/FEX (TC 1.A.43) family.

Its subcellular location is the cell inner membrane. The catalysed reaction is fluoride(in) = fluoride(out). Na(+) is not transported, but it plays an essential structural role and its presence is essential for fluoride channel function. In terms of biological role, fluoride-specific ion channel. Important for reducing fluoride concentration in the cell, thus reducing its toxicity. This chain is Fluoride-specific ion channel FluC, found in Psychrobacter arcticus (strain DSM 17307 / VKM B-2377 / 273-4).